The chain runs to 283 residues: ATP synthase gamma chain (283 aa).

It belongs to the ATPase gamma chain family. F-type ATPases have 2 components, CF(1) - the catalytic core - and CF(0) - the membrane proton channel. CF(1) has five subunits: alpha(3), beta(3), gamma(1), delta(1), epsilon(1). CF(0) has three main subunits: a, b and c.

The protein localises to the cell membrane. Functionally, produces ATP from ADP in the presence of a proton gradient across the membrane. The gamma chain is believed to be important in regulating ATPase activity and the flow of protons through the CF(0) complex. The sequence is that of ATP synthase gamma chain from Desulforamulus reducens (strain ATCC BAA-1160 / DSM 100696 / MI-1) (Desulfotomaculum reducens).